A 165-amino-acid chain; its full sequence is Crossover junction endodeoxyribonuclease RuvC (165 aa).

Residues Asp-8, Glu-67, and Asp-139 contribute to the active site. Mg(2+) is bound by residues Asp-8, Glu-67, and Asp-139.

It belongs to the RuvC family. As to quaternary structure, homodimer which binds Holliday junction (HJ) DNA. The HJ becomes 2-fold symmetrical on binding to RuvC with unstacked arms; it has a different conformation from HJ DNA in complex with RuvA. In the full resolvosome a probable DNA-RuvA(4)-RuvB(12)-RuvC(2) complex forms which resolves the HJ. Mg(2+) serves as cofactor.

The protein resides in the cytoplasm. The enzyme catalyses Endonucleolytic cleavage at a junction such as a reciprocal single-stranded crossover between two homologous DNA duplexes (Holliday junction).. The RuvA-RuvB-RuvC complex processes Holliday junction (HJ) DNA during genetic recombination and DNA repair. Endonuclease that resolves HJ intermediates. Cleaves cruciform DNA by making single-stranded nicks across the HJ at symmetrical positions within the homologous arms, yielding a 5'-phosphate and a 3'-hydroxyl group; requires a central core of homology in the junction. The consensus cleavage sequence is 5'-(A/T)TT(C/G)-3'. Cleavage occurs on the 3'-side of the TT dinucleotide at the point of strand exchange. HJ branch migration catalyzed by RuvA-RuvB allows RuvC to scan DNA until it finds its consensus sequence, where it cleaves and resolves the cruciform DNA. The polypeptide is Crossover junction endodeoxyribonuclease RuvC (Alkalilimnicola ehrlichii (strain ATCC BAA-1101 / DSM 17681 / MLHE-1)).